Consider the following 213-residue polypeptide: Small ribosomal subunit protein uS3 (213 aa).

Residues 38 to 106 (IRSYIKKLLY…EFSLEVTEVR (69 aa)) enclose the KH type-2 domain.

The protein belongs to the universal ribosomal protein uS3 family. In terms of assembly, part of the 30S ribosomal subunit. Forms a tight complex with proteins S10 and S14.

In terms of biological role, binds the lower part of the 30S subunit head. Binds mRNA in the 70S ribosome, positioning it for translation. The chain is Small ribosomal subunit protein uS3 from Lawsonia intracellularis (strain PHE/MN1-00).